The chain runs to 497 residues: MTGRSYEVRTFGCQMNVHDSERLSGLLESAGYVPAPPGSEADVVVFNTCAVRENADNRLYGNLGQLVPVKKGHPGMQIAVGGCLAQKDRSTILDRAPWVDVVFGTHNLHRLPVLLERARHNAAAELEIAEALEVFPSSLPTRRASHHSAWVSISVGCDNTCTFCIVPSLRGRERDRRPGDVLAEVEALVGEGALEITLLGQNVNSYGRSLGDPGAFAKLLLACGRVDGLERVRFTSPHPRDFTDDVIEAMAATPNVCHQLHMPLQSGSDDVLRRMRRSYRRDRFLGIVERVRAAMPDAAITTDIIVGFPGETEADFADTLDVVRQARFAGAFTFQYSPRPGTPAATMDGQIDRTTVAERYARLVALQDEVSWAQNRELVGRRVELLVAEGEGRKDDATGRLSGRARDGRLVHFRAGAGLAARPGDVVETVVTRAAPHHLTADGPLLSHRRTRAGDAWELARTAPVPAAGDGAGTTAARQTVALGMPSVGPAPSPGRR.

The MTTase N-terminal domain maps to 4–120 (RSYEVRTFGC…LPVLLERARH (117 aa)). Positions 13, 49, 83, 157, 161, and 164 each coordinate [4Fe-4S] cluster. Positions 143 to 374 (RASHHSAWVS…ALQDEVSWAQ (232 aa)) constitute a Radical SAM core domain. Residues 376–445 (RELVGRRVEL…PHHLTADGPL (70 aa)) form the TRAM domain.

This sequence belongs to the methylthiotransferase family. MiaB subfamily. In terms of assembly, monomer. [4Fe-4S] cluster serves as cofactor.

The protein resides in the cytoplasm. It catalyses the reaction N(6)-dimethylallyladenosine(37) in tRNA + (sulfur carrier)-SH + AH2 + 2 S-adenosyl-L-methionine = 2-methylsulfanyl-N(6)-dimethylallyladenosine(37) in tRNA + (sulfur carrier)-H + 5'-deoxyadenosine + L-methionine + A + S-adenosyl-L-homocysteine + 2 H(+). In terms of biological role, catalyzes the methylthiolation of N6-(dimethylallyl)adenosine (i(6)A), leading to the formation of 2-methylthio-N6-(dimethylallyl)adenosine (ms(2)i(6)A) at position 37 in tRNAs that read codons beginning with uridine. The protein is tRNA-2-methylthio-N(6)-dimethylallyladenosine synthase of Frankia alni (strain DSM 45986 / CECT 9034 / ACN14a).